Reading from the N-terminus, the 53-residue chain is UPF0391 membrane protein ESA_03375 (53 aa).

2 helical membrane passes run 4 to 24 (WGII…GGLA) and 28 to 48 (AGAA…SLFM).

This sequence belongs to the UPF0391 family.

The protein resides in the cell membrane. The sequence is that of UPF0391 membrane protein ESA_03375 from Cronobacter sakazakii (strain ATCC BAA-894) (Enterobacter sakazakii).